A 321-amino-acid chain; its full sequence is Calcium-binding protein LPS1-alpha (321 aa).

8 EF-hand domains span residues 15–49, 47–82, 85–120, 121–156, 165–200, 200–233, 232–267, and 269–304; these read DAIE…NWTE, WTEE…STKE, YSSD…IYTK, VVDG…KLPI, EYRE…STKY, YSDK…DGVS, VSKD…IYRQ, and VDFE…NCPY. The Ca(2+) site is built by aspartate 29, asparagine 31, aspartate 33, threonine 35, glutamate 40, aspartate 60, asparagine 62, aspartate 64, histidine 66, glutamate 71, aspartate 98, aspartate 100, asparagine 102, arginine 104, glutamate 109, aspartate 134, aspartate 136, aspartate 138, histidine 140, glutamate 145, aspartate 178, asparagine 180, aspartate 182, serine 184, glutamate 189, aspartate 213, asparagine 215, aspartate 217, arginine 219, glutamate 224, aspartate 245, aspartate 247, asparagine 249, lysine 251, glutamate 256, aspartate 284, aspartate 286, tyrosine 288, and glutamate 293.

In terms of tissue distribution, aboral ectoderm, a squamous epithelium covering the surface of the late stage embryo and larva.

In terms of biological role, calcium-binding protein involved in larval development and metamorphosis. Likely to function as calcium buffers mediating the transport of calcium from the sea water to the blastocoel where calcium is required for skeleton formation. The chain is Calcium-binding protein LPS1-alpha from Lytechinus pictus (Painted sea urchin).